The following is a 612-amino-acid chain: Pentatricopeptide repeat-containing protein At4g14050, mitochondrial (612 aa).

Residues 1–24 (MLIPHYLHQLQLCARNRTLTTAKA) constitute a mitochondrion transit peptide. PPR repeat units follow at residues 37–71 (CCPL…DHIA), 72–103 (WASV…GLRP), 104–138 (DDFV…EYAN), 139–169 (DEVV…IRVK), 170–204 (NTIS…NLYS), 205–235 (WTAL…RVDI), 237–271 (DPLV…GFDS), 272–302 (CVFI…MRHR), 303–337 (DVVS…GVKP), 338–373 (NEVT…GIRP), and 374–408 (SLQH…PDEP). The segment at 409 to 485 (TWAALLSACK…DPGHSSVEVR (77 aa)) is type E motif. A type E(+) motif region spans residues 486–516 (KETEVFYAGETSHPLKEDIFRLLKKLEEEMR). Residues 518-612 (RNGYVPDTSW…GGKCSCNDFW (95 aa)) are type DYW motif.

It belongs to the PPR family. PCMP-H subfamily. Interacts with MORF8/RIP1 and MORF1/RIP8.

The protein resides in the mitochondrion. In terms of biological role, involved in C-to-U editing of mitochondrial RNA. Required specifically for editing the mitochondrial NAD4, MT-CYB/COB and RPL16 transcripts. In Arabidopsis thaliana (Mouse-ear cress), this protein is Pentatricopeptide repeat-containing protein At4g14050, mitochondrial (PCMP-H13).